The primary structure comprises 432 residues: Phosphoribosylamine--glycine ligase (432 aa).

The ATP-grasp domain occupies 110-316; it reads RNFMKDNDIE…MIDVMSAVVN (207 aa). Position 137 to 194 (137 to 194) interacts with ATP; that stretch reads IEELGSVAIKPAGLTGGKGVKVMGDQLPDTGAAYDYAVSLLDGDNVVVEENLVGEEFT. 3 residues coordinate Mg(2+): Gln274, Glu286, and Asn288. Residues Gln274, Glu286, and Asn288 each contribute to the Mn(2+) site.

This sequence belongs to the GARS family. The cofactor is Mg(2+). It depends on Mn(2+) as a cofactor.

It carries out the reaction 5-phospho-beta-D-ribosylamine + glycine + ATP = N(1)-(5-phospho-beta-D-ribosyl)glycinamide + ADP + phosphate + H(+). Its pathway is purine metabolism; IMP biosynthesis via de novo pathway; N(1)-(5-phospho-D-ribosyl)glycinamide from 5-phospho-alpha-D-ribose 1-diphosphate: step 2/2. The sequence is that of Phosphoribosylamine--glycine ligase from Methanococcoides burtonii (strain DSM 6242 / NBRC 107633 / OCM 468 / ACE-M).